Here is a 274-residue protein sequence, read N- to C-terminus: tRNA-cytidine(32) 2-sulfurtransferase (274 aa).

Residues 40-45 carry the PP-loop motif motif; the sequence is SGGKDS. Cys115, Cys118, and Cys206 together coordinate [4Fe-4S] cluster.

The protein belongs to the TtcA family. Homodimer. Mg(2+) is required as a cofactor. [4Fe-4S] cluster serves as cofactor.

It localises to the cytoplasm. It carries out the reaction cytidine(32) in tRNA + S-sulfanyl-L-cysteinyl-[cysteine desulfurase] + AH2 + ATP = 2-thiocytidine(32) in tRNA + L-cysteinyl-[cysteine desulfurase] + A + AMP + diphosphate + H(+). It functions in the pathway tRNA modification. Functionally, catalyzes the ATP-dependent 2-thiolation of cytidine in position 32 of tRNA, to form 2-thiocytidine (s(2)C32). The sulfur atoms are provided by the cysteine/cysteine desulfurase (IscS) system. The chain is tRNA-cytidine(32) 2-sulfurtransferase from Ectopseudomonas mendocina (strain ymp) (Pseudomonas mendocina).